Consider the following 530-residue polypeptide: Glucose-6-phosphate isomerase (530 aa).

E356 acts as the Proton donor in catalysis. Catalysis depends on residues H387 and K502.

Belongs to the GPI family.

Its subcellular location is the cytoplasm. It carries out the reaction alpha-D-glucose 6-phosphate = beta-D-fructose 6-phosphate. Its pathway is carbohydrate biosynthesis; gluconeogenesis. It participates in carbohydrate degradation; glycolysis; D-glyceraldehyde 3-phosphate and glycerone phosphate from D-glucose: step 2/4. Its function is as follows. Catalyzes the reversible isomerization of glucose-6-phosphate to fructose-6-phosphate. The protein is Glucose-6-phosphate isomerase of Borreliella burgdorferi (strain ATCC 35210 / DSM 4680 / CIP 102532 / B31) (Borrelia burgdorferi).